Reading from the N-terminus, the 257-residue chain is Acetylglutamate kinase (257 aa).

Substrate contacts are provided by residues 43–44 (GG), R65, and N157. Residues 180-185 (DVSGIL) and 208-210 (IIT) each bind ATP.

It belongs to the acetylglutamate kinase family. ArgB subfamily. Homodimer.

It is found in the cytoplasm. The catalysed reaction is N-acetyl-L-glutamate + ATP = N-acetyl-L-glutamyl 5-phosphate + ADP. It functions in the pathway amino-acid biosynthesis; L-arginine biosynthesis; N(2)-acetyl-L-ornithine from L-glutamate: step 2/4. In terms of biological role, catalyzes the ATP-dependent phosphorylation of N-acetyl-L-glutamate. This is Acetylglutamate kinase from Salmonella schwarzengrund (strain CVM19633).